The chain runs to 158 residues: UPF0145 protein Psyc_1853 (158 aa).

A compositionally biased stretch (polar residues) spans 113-122 (IYQSSNQPPS). The segment at 113–158 (IYQSSNQPPSHHSGHSQYEEPVPSAAQPSTTAQANDDLPRFNPFGE) is disordered.

Belongs to the UPF0145 family.

The polypeptide is UPF0145 protein Psyc_1853 (Psychrobacter arcticus (strain DSM 17307 / VKM B-2377 / 273-4)).